The primary structure comprises 97 residues: UPF0235 protein PFL_5841 (97 aa).

The protein belongs to the UPF0235 family.

The chain is UPF0235 protein PFL_5841 from Pseudomonas fluorescens (strain ATCC BAA-477 / NRRL B-23932 / Pf-5).